The chain runs to 101 residues: Large ribosomal subunit protein bL28 (101 aa).

The protein belongs to the bacterial ribosomal protein bL28 family.

This Rhodopseudomonas palustris (strain BisA53) protein is Large ribosomal subunit protein bL28.